The chain runs to 130 residues: Fluoride-specific ion channel FluC (130 aa).

Transmembrane regions (helical) follow at residues 3–23 (LVFL…YFVG), 38–58 (LGTF…GHLA), 67–87 (FGIF…SYGL), and 102–122 (ISYV…GWFL). Na(+) is bound by residues Gly77 and Thr80.

It belongs to the fluoride channel Fluc/FEX (TC 1.A.43) family.

The protein localises to the cell inner membrane. It catalyses the reaction fluoride(in) = fluoride(out). Its activity is regulated as follows. Na(+) is not transported, but it plays an essential structural role and its presence is essential for fluoride channel function. In terms of biological role, fluoride-specific ion channel. Important for reducing fluoride concentration in the cell, thus reducing its toxicity. The protein is Fluoride-specific ion channel FluC of Helicobacter pylori (strain J99 / ATCC 700824) (Campylobacter pylori J99).